Reading from the N-terminus, the 294-residue chain is Ethanolamine ammonia-lyase small subunit (294 aa).

Positions 207 and 228 each coordinate adenosylcob(III)alamin.

Belongs to the EutC family. In terms of assembly, the basic unit is a heterodimer which dimerizes to form tetramers. The heterotetramers trimerize; 6 large subunits form a core ring with 6 small subunits projecting outwards. It depends on adenosylcob(III)alamin as a cofactor.

The protein localises to the bacterial microcompartment. The enzyme catalyses ethanolamine = acetaldehyde + NH4(+). The protein operates within amine and polyamine degradation; ethanolamine degradation. In terms of biological role, catalyzes the deamination of various vicinal amino-alcohols to oxo compounds. Allows this organism to utilize ethanolamine as the sole source of nitrogen and carbon in the presence of external vitamin B12. This Clostridium tetani (strain Massachusetts / E88) protein is Ethanolamine ammonia-lyase small subunit.